The chain runs to 336 residues: Nucleoid-associated protein ECA2747 (336 aa).

The tract at residues 317–336 is disordered; the sequence is KGTPPNLRDQLQRRTSGGKQ.

This sequence belongs to the YejK family.

It localises to the cytoplasm. Its subcellular location is the nucleoid. The chain is Nucleoid-associated protein ECA2747 from Pectobacterium atrosepticum (strain SCRI 1043 / ATCC BAA-672) (Erwinia carotovora subsp. atroseptica).